The primary structure comprises 329 residues: MNQVDYLRISLVDRCNFRCQYCMPEQAKLEFLAQSEVLTGDEILTLVRDVFLPLGFTRFRLTGGEPLVRPDVVEIVGKIAALPQVQDLSMTTNAYLLTELAEDLYAAGLRRINISLDSLIPAVFDQIVGTQGRTRWQQVWEGIQAAYRVGFDPLKLNVVVIPGVNDQEVPDLAALSLDRHWHIRFIEFMPIGNAHLFHHKGWIPSEELRQRIRDRWGLTEGYVRGNGPADVFQIPGAKGTLGFISQMSECFCDRCNRVRLSADGWLRPCLLNETGQIDLKTGLRDNVPIEELRERVRQLLLLKPEINYKGRDSGTAGAEYHRTMSQIGG.

The Radical SAM core domain occupies 1-229 (MNQVDYLRIS…EGYVRGNGPA (229 aa)). Arg8 is a GTP binding site. Cys15 and Cys19 together coordinate [4Fe-4S] cluster. An S-adenosyl-L-methionine-binding site is contributed by Tyr21. Cys22 lines the [4Fe-4S] cluster pocket. Arg60 provides a ligand contact to GTP. Gly64 lines the S-adenosyl-L-methionine pocket. Thr91 is a binding site for GTP. An S-adenosyl-L-methionine-binding site is contributed by Ser115. Lys155 lines the GTP pocket. Met189 is a binding site for S-adenosyl-L-methionine. Residues Cys252 and Cys255 each contribute to the [4Fe-4S] cluster site. 257-259 (RVR) lines the GTP pocket. Cys269 is a binding site for [4Fe-4S] cluster.

It belongs to the radical SAM superfamily. MoaA family. Monomer and homodimer. The cofactor is [4Fe-4S] cluster.

The catalysed reaction is GTP + AH2 + S-adenosyl-L-methionine = (8S)-3',8-cyclo-7,8-dihydroguanosine 5'-triphosphate + 5'-deoxyadenosine + L-methionine + A + H(+). It participates in cofactor biosynthesis; molybdopterin biosynthesis. In terms of biological role, catalyzes the cyclization of GTP to (8S)-3',8-cyclo-7,8-dihydroguanosine 5'-triphosphate. This chain is GTP 3',8-cyclase, found in Cyanothece sp. (strain PCC 7425 / ATCC 29141).